A 271-amino-acid chain; its full sequence is Protein PXR1 (271 aa).

In terms of domain architecture, G-patch spans 25–72 (TSRFGHQFLEKFGWKPGMGLGLSPMNSNTSHIKVSIKDDNVGLGAKLK). The disordered stretch occupies residues 147-239 (SNAKKRKREG…SASNIPDAVN (93 aa)). The span at 157-168 (DDSEDEDDDDKE) shows a compositional bias: acidic residues. The span at 175–203 (KKHKKHKKHKKDKKKDKKDKKEHKKHKKE) shows a compositional bias: basic residues. A compositionally biased stretch (basic and acidic residues) spans 204–221 (EKRLKKEKRAEKTKETKK). The residue at position 230 (serine 230) is a Phosphoserine.

This sequence belongs to the PINX1 family. In terms of assembly, interacts with EST2.

The protein resides in the nucleus. The protein localises to the nucleolus. Involved in rRNA-processing at A0, A1 and A2 sites through its action in U18 and U24 snoRNA 3'-end final trimming. Negative regulator of telomerase through competition for binding to EST2 with TLC1. The chain is Protein PXR1 (PXR1) from Saccharomyces cerevisiae (strain ATCC 204508 / S288c) (Baker's yeast).